Consider the following 607-residue polypeptide: Elongation factor 4 (607 aa).

A tr-type G domain is found at 11–193 (SKIRNFSIIA…QIVEKVPAPT (183 aa)). GTP is bound by residues 23 to 28 (DHGKST) and 140 to 143 (NKID).

It belongs to the TRAFAC class translation factor GTPase superfamily. Classic translation factor GTPase family. LepA subfamily.

The protein resides in the cell membrane. It carries out the reaction GTP + H2O = GDP + phosphate + H(+). In terms of biological role, required for accurate and efficient protein synthesis under certain stress conditions. May act as a fidelity factor of the translation reaction, by catalyzing a one-codon backward translocation of tRNAs on improperly translocated ribosomes. Back-translocation proceeds from a post-translocation (POST) complex to a pre-translocation (PRE) complex, thus giving elongation factor G a second chance to translocate the tRNAs correctly. Binds to ribosomes in a GTP-dependent manner. In Bacillus cereus (strain Q1), this protein is Elongation factor 4.